The chain runs to 518 residues: ATP synthase subunit alpha (518 aa).

An ATP-binding site is contributed by 169–176 (GDRKTGKT).

The protein belongs to the ATPase alpha/beta chains family. F-type ATPases have 2 components, CF(1) - the catalytic core - and CF(0) - the membrane proton channel. CF(1) has five subunits: alpha(3), beta(3), gamma(1), delta(1), epsilon(1). CF(0) has three main subunits: a(1), b(2) and c(9-12). The alpha and beta chains form an alternating ring which encloses part of the gamma chain. CF(1) is attached to CF(0) by a central stalk formed by the gamma and epsilon chains, while a peripheral stalk is formed by the delta and b chains.

Its subcellular location is the cell membrane. The enzyme catalyses ATP + H2O + 4 H(+)(in) = ADP + phosphate + 5 H(+)(out). Functionally, produces ATP from ADP in the presence of a proton gradient across the membrane. The alpha chain is a regulatory subunit. The polypeptide is ATP synthase subunit alpha (Enterococcus hirae (strain ATCC 9790 / DSM 20160 / JCM 8729 / LMG 6399 / NBRC 3181 / NCIMB 6459 / NCDO 1258 / NCTC 12367 / WDCM 00089 / R)).